A 245-amino-acid polypeptide reads, in one-letter code: Pyridoxine 5'-phosphate synthase (245 aa).

3-amino-2-oxopropyl phosphate is bound by residues N8 and R19. H44 functions as the Proton acceptor in the catalytic mechanism. 1-deoxy-D-xylulose 5-phosphate contacts are provided by R46 and H51. E76 acts as the Proton acceptor in catalysis. T106 lines the 1-deoxy-D-xylulose 5-phosphate pocket. Residue H198 is the Proton donor of the active site. Residues D199 and G221–H222 each bind 3-amino-2-oxopropyl phosphate.

This sequence belongs to the PNP synthase family. Homooctamer; tetramer of dimers.

The protein resides in the cytoplasm. It catalyses the reaction 3-amino-2-oxopropyl phosphate + 1-deoxy-D-xylulose 5-phosphate = pyridoxine 5'-phosphate + phosphate + 2 H2O + H(+). It participates in cofactor biosynthesis; pyridoxine 5'-phosphate biosynthesis; pyridoxine 5'-phosphate from D-erythrose 4-phosphate: step 5/5. In terms of biological role, catalyzes the complicated ring closure reaction between the two acyclic compounds 1-deoxy-D-xylulose-5-phosphate (DXP) and 3-amino-2-oxopropyl phosphate (1-amino-acetone-3-phosphate or AAP) to form pyridoxine 5'-phosphate (PNP) and inorganic phosphate. This is Pyridoxine 5'-phosphate synthase from Brucella anthropi (strain ATCC 49188 / DSM 6882 / CCUG 24695 / JCM 21032 / LMG 3331 / NBRC 15819 / NCTC 12168 / Alc 37) (Ochrobactrum anthropi).